A 230-amino-acid chain; its full sequence is uncharacterized protein (230 aa).

The first 18 residues, 1 to 18, serve as a signal peptide directing secretion; it reads MRQYTSKSILFMTAIALS.

This is an uncharacterized protein from Pasteurella multocida (strain Pm70).